A 119-amino-acid chain; its full sequence is Hydrogenase maturation factor HypA (119 aa).

Histidine 2 serves as a coordination point for Ni(2+). Zn(2+) is bound by residues cysteine 73, cysteine 76, cysteine 89, and cysteine 92.

It belongs to the HypA/HybF family.

Involved in the maturation of [NiFe] hydrogenases. Required for nickel insertion into the metal center of the hydrogenase. The protein is Hydrogenase maturation factor HypA of Dehalococcoides mccartyi (strain ATCC BAA-2100 / JCM 16839 / KCTC 5957 / BAV1).